A 924-amino-acid polypeptide reads, in one-letter code: Bifunctional glutamine synthetase adenylyltransferase/adenylyl-removing enzyme (924 aa).

Positions 1 to 422 (MQTKGCRFFM…QFKKLIQEEV (422 aa)) are adenylyl removase. An adenylyl transferase region spans residues 424–924 (SPDETDTELE…PASTMALESE (501 aa)).

It belongs to the GlnE family. It depends on Mg(2+) as a cofactor.

It carries out the reaction [glutamine synthetase]-O(4)-(5'-adenylyl)-L-tyrosine + phosphate = [glutamine synthetase]-L-tyrosine + ADP. The catalysed reaction is [glutamine synthetase]-L-tyrosine + ATP = [glutamine synthetase]-O(4)-(5'-adenylyl)-L-tyrosine + diphosphate. Involved in the regulation of glutamine synthetase GlnA, a key enzyme in the process to assimilate ammonia. When cellular nitrogen levels are high, the C-terminal adenylyl transferase (AT) inactivates GlnA by covalent transfer of an adenylyl group from ATP to specific tyrosine residue of GlnA, thus reducing its activity. Conversely, when nitrogen levels are low, the N-terminal adenylyl removase (AR) activates GlnA by removing the adenylyl group by phosphorolysis, increasing its activity. The regulatory region of GlnE binds the signal transduction protein PII (GlnB) which indicates the nitrogen status of the cell. This is Bifunctional glutamine synthetase adenylyltransferase/adenylyl-removing enzyme from Acinetobacter baylyi (strain ATCC 33305 / BD413 / ADP1).